The sequence spans 1239 residues: WD repeat-containing protein 11 (1239 aa).

WD repeat units follow at residues arginine 63–glutamate 112, glutamate 115–lysine 158, threonine 358–serine 398, arginine 476–glutamate 515, asparagine 571–glutamate 610, glycine 713–valine 750, threonine 752–serine 792, asparagine 798–arginine 836, and serine 898–phenylalanine 944. Residues glutamate 1213 to glutamate 1239 are disordered. The span at leucine 1215–serine 1226 shows a compositional bias: polar residues.

Component of the complex WDR11.

The protein resides in the cytoplasm. It localises to the cytoskeleton. The protein localises to the cilium basal body. It is found in the nucleus. Its subcellular location is the cilium axoneme. The protein resides in the cytoplasmic vesicle. It localises to the golgi apparatus. The protein localises to the trans-Golgi network. In terms of biological role, involved in the Hedgehog (Hh) signaling pathway, is essential for normal ciliogenesis. Regulates the proteolytic processing of gli3 and cooperates with the transcription factor emx1 in the induction of downstream Hh pathway gene expression and gonadotropin-releasing hormone production. WDR11 complex facilitates the tethering of Adaptor protein-1 complex (AP-1)-derived vesicles. This Danio rerio (Zebrafish) protein is WD repeat-containing protein 11 (wdr11).